The chain runs to 551 residues: Podocalyxin (551 aa).

The N-terminal stretch at 1–21 is a signal peptide; sequence MRSALALAALLLLLLSPPSLS. Residues 18–324 form a disordered region; that stretch reads PSLSQEKSPQ…QRVSCGPPER (307 aa). The Extracellular segment spans residues 22-452; that stretch reads QEKSPQPGPT…PPEETEDRFS (431 aa). Over residues 32–59 the composition is skewed to low complexity; that stretch reads PMATSTSTRPAPASAPAPKSSVAASVPA. Polar residues predominate over residues 60–90; the sequence is EQNTTPMTTKAPATQSPSASPGSSVENSAPA. Low complexity predominate over residues 91–104; the sequence is QGSTTTQQSLSVTT. Residues 142–164 are compositionally biased toward polar residues; that stretch reads APSNHSITTKPLATEATSQAPRQ. 2 N-linked (GlcNAc...) asparagine glycosylation sites follow: N145 and N180. Residues 234 to 244 show a composition bias toward polar residues; the sequence is PVASSAETQGM. The segment covering 289–300 has biased composition (low complexity); it reads TSSSTELASTAL. An N-linked (GlcNAc...) asparagine glycan is attached at N333. A helical transmembrane segment spans residues 453–473; it reads LPLIITIVCMASFLLLVAALY. Over 474-551 the chain is Cytoplasmic; that stretch reads GCCHQRLSHR…DLDEEEDTHL (78 aa). A Phosphothreonine modification is found at T511. S530 is subject to Phosphoserine. A Phosphothreonine modification is found at T549.

This sequence belongs to the podocalyxin family. In terms of assembly, monomer; when associated with the membrane raft. Oligomer; when integrated in the apical membrane. Found in a complex with EZR, PODXL and NHERF2. Associates with the actin cytoskeleton through complex formation with EZR and NHERF2. Interacts (via the C-terminal PDZ-binding motif DTHL) with NHERF1 (via the PDZ domains); interaction is not detected in glomerular epithelium cells, take place early in the secretory pathway and is necessary for its apical membrane sorting. Interacts (via the C-terminal PDZ-binding motif DTHL) with NHERF2 (via the PDZ 1 domain); interaction is detected in glomerular epithelium cells. Interacts with EZR. In terms of processing, N- and O-linked glycosylated. Sialoglycoprotein. As to expression, glomerular epithelium cell (podocyte) and endothelial cells.

It is found in the apical cell membrane. It localises to the cell projection. The protein resides in the microvillus. Its subcellular location is the membrane raft. The protein localises to the lamellipodium. It is found in the filopodium. It localises to the ruffle. The protein resides in the membrane. Its function is as follows. Involved in the regulation of both adhesion and cell morphology and cancer progression. Functions as an anti-adhesive molecule that maintains an open filtration pathway between neighboring foot processes in the podocyte by charge repulsion. Acts as a pro-adhesive molecule, enhancing the adherence of cells to immobilized ligands, increasing the rate of migration and cell-cell contacts in an integrin-dependent manner. Induces the formation of apical actin-dependent microvilli. Involved in the formation of a preapical plasma membrane subdomain to set up initial epithelial polarization and the apical lumen formation during renal tubulogenesis. Plays a role in cancer development and aggressiveness by inducing cell migration and invasion through its interaction with the actin-binding protein EZR. Affects EZR-dependent signaling events, leading to increased activities of the MAPK and PI3K pathways in cancer cells. The chain is Podocalyxin (PODXL) from Oryctolagus cuniculus (Rabbit).